The chain runs to 116 residues: U16-barytoxin-Tl1b (116 aa).

An N-terminal signal peptide occupies residues 1 to 20; it reads MKTIIVFLSLLVLATKFGDA. A propeptide spanning residues 21–74 is cleaved from the precursor; the sequence is KEGVNQKQKKEVTQNEFREEYLNEMAAMSLVQQLEAIERALFENEAGRNSRQKR. 3 disulfide bridges follow: Cys75-Cys90, Cys82-Cys95, and Cys89-Cys110.

Belongs to the neurotoxin 14 (magi-1) family. 06 (ICK-Trit) subfamily. In terms of tissue distribution, expressed by the venom gland.

It localises to the secreted. Ion channel inhibitor. This is U16-barytoxin-Tl1b from Trittame loki (Brush-footed trapdoor spider).